We begin with the raw amino-acid sequence, 206 residues long: MCAAQRSAAALAAVAPRSVYAFSARPLAGGEPISLGSLRGKVLLIENVASLUGTTVRDYTQMNELQRRLGPRGLVVLGFPCNQFGHQENAKNGEILNCLKYVRPGGGFEPNFMLFEKCEVNGANAHPLFAFLREALPTPSDDATALMTDPKFITWSPVCRNDIAWNFEKFLVGPDGVPLRRYSRRFLTIDIEPDIEALLSQEPSSA.

S37 is subject to Phosphoserine. The active site involves U52. A non-standard amino acid (selenocysteine) is located at residue U52. K91, K117, and K151 each carry N6-acetyllysine; alternate. 3 positions are modified to N6-succinyllysine; alternate: K91, K117, and K151. 2 positions are modified to phosphoserine: S200 and S204.

It belongs to the glutathione peroxidase family. Homotetramer. Interacts with MIEN1. During periods of oxidative stress, Sec-52 may react with a superoxide radical, irreversibly lose hydroselenide and be converted to dehydroalanine.

The protein resides in the cytoplasm. Its subcellular location is the mitochondrion. It catalyses the reaction 2 glutathione + H2O2 = glutathione disulfide + 2 H2O. The catalysed reaction is a hydroperoxy polyunsaturated fatty acid + 2 glutathione = a hydroxy polyunsaturated fatty acid + glutathione disulfide + H2O. It carries out the reaction tert-butyl hydroperoxide + 2 glutathione = tert-butanol + glutathione disulfide + H2O. The enzyme catalyses cumene hydroperoxide + 2 glutathione = 2-phenylpropan-2-ol + glutathione disulfide + H2O. It catalyses the reaction (13S)-hydroperoxy-(9Z,11E)-octadecadienoate + 2 glutathione = (13S)-hydroxy-(9Z,11E)-octadecadienoate + glutathione disulfide + H2O. The catalysed reaction is (9S)-hydroperoxy-(10E,12Z)-octadecadienoate + 2 glutathione = (9S)-hydroxy-(10E,12Z)-octadecadienoate + glutathione disulfide + H2O. It carries out the reaction (5S)-hydroperoxy-(6E,8Z,11Z,14Z)-eicosatetraenoate + 2 glutathione = (5S)-hydroxy-(6E,8Z,11Z,14Z)-eicosatetraenoate + glutathione disulfide + H2O. The enzyme catalyses (12S)-hydroperoxy-(5Z,8Z,10E,14Z)-eicosatetraenoate + 2 glutathione = (12S)-hydroxy-(5Z,8Z,10E,14Z)-eicosatetraenoate + glutathione disulfide + H2O. It catalyses the reaction (12R)-hydroperoxy-(5Z,8Z,10E,14Z)-eicosatetraenoate + 2 glutathione = (12R)-hydroxy-(5Z,8Z,10E,14Z)-eicosatetraenoate + glutathione disulfide + H2O. The catalysed reaction is (15S)-hydroperoxy-(5Z,8Z,11Z,13E)-eicosatetraenoate + 2 glutathione = (15S)-hydroxy-(5Z,8Z,11Z,13E)-eicosatetraenoate + glutathione disulfide + H2O. It carries out the reaction (5S)-hydroperoxy-(6E,8Z,11Z,14Z,17Z)-eicosapentaenoate + 2 glutathione = (5S)-hydroxy-(6E,8Z,11Z,14Z,17Z)-eicosapentaenoate + glutathione disulfide + H2O. The enzyme catalyses (12S)-hydroperoxy-(5Z,8Z,10E,14Z,17Z)-eicosapentaenoate + 2 glutathione = (12S)-hydroxy-(5Z,8Z,10E,14Z,17Z)-eicosapentaenoate + glutathione disulfide + H2O. It catalyses the reaction (15S)-hydroperoxy-(5Z,8Z,11Z,13E,17Z)-eicosapentaenoate + 2 glutathione = (15S)-hydroxy-(5Z,8Z,11Z,13E,17Z)-eicosapentaenoate + glutathione disulfide + H2O. The catalysed reaction is (15S)-hydroperoxy-(11Z,13E)-eicosadienoate + 2 glutathione = (15S)-hydroxy-(11Z,13E)-eicosadienoate + glutathione disulfide + H2O. It carries out the reaction (17S)-hydroperoxy-(4Z,7Z,10Z,13Z,15E,19Z)-docosahexaenoate + 2 glutathione = (17S)-hydroxy-(4Z,7Z,10Z,13Z,15E,19Z)-docosahexaenoate + glutathione disulfide + H2O. Catalyzes the reduction of hydroperoxides in a glutathione-dependent manner thus regulating cellular redox homeostasis. Can reduce small soluble hydroperoxides such as H2O2, cumene hydroperoxide and tert-butyl hydroperoxide, as well as several fatty acid-derived hydroperoxides. In platelets catalyzes the reduction of 12-hydroperoxyeicosatetraenoic acid, the primary product of the arachidonate 12-lipoxygenase pathway. This is Glutathione peroxidase 1 (GPX1) from Sus scrofa (Pig).